The following is a 210-amino-acid chain: Large ribosomal subunit protein bL9 (210 aa).

The interval 172 to 210 (EAAAAALEPDSEEEFEAATPPSELAAEASDEDADDAKEA) is disordered. Acidic residues predominate over residues 199–210 (ASDEDADDAKEA).

The protein belongs to the bacterial ribosomal protein bL9 family.

In terms of biological role, binds to the 23S rRNA. This Sphingopyxis alaskensis (strain DSM 13593 / LMG 18877 / RB2256) (Sphingomonas alaskensis) protein is Large ribosomal subunit protein bL9.